The following is a 1455-amino-acid chain: Cleavage and polyadenylation specificity factor subunit 1 (1455 aa).

This sequence belongs to the CPSF1 family. In terms of assembly, component of the cleavage and polyadenylation specificity factor (CPSF) complex, composed of at least Clp, Cpsf73, Cpsf100 and Cpsf160.

It localises to the nucleus. Its function is as follows. Component of the cleavage and polyadenylation specificity factor (CPSF) complex that plays a key role in pre-mRNA 3'-end formation, recognizing the AAUAAA signal sequence and interacting with poly(A) polymerase and other factors to bring about cleavage and poly(A) addition. This subunit is involved in the RNA recognition step of the polyadenylation reaction. This Drosophila melanogaster (Fruit fly) protein is Cleavage and polyadenylation specificity factor subunit 1 (Cpsf160).